A 146-amino-acid chain; its full sequence is Large ribosomal subunit protein uL15 (146 aa).

The segment at 1–51 (MKLHELQPAPGSRKERNRVGRGIGSGNGKTSGKGHKGQNARSGGGVRIGFE) is disordered. Gly residues-rich tracts occupy residues 21–31 (RGIGSGNGKTS) and 42–51 (SGGGVRIGFE).

Belongs to the universal ribosomal protein uL15 family. Part of the 50S ribosomal subunit.

Binds to the 23S rRNA. The sequence is that of Large ribosomal subunit protein uL15 from Anoxybacillus flavithermus (strain DSM 21510 / WK1).